Reading from the N-terminus, the 335-residue chain is MSQINLLLLCGGGGDEHAISLMSADFLETSLAKEPEINLLRVELDGQGHYRTQDGRSCELTNRKEIRFAAEEQAPWPVDYVIPCIHGFPGETGDIQSYFDLIKLPFFGCDSESSSNCFNKVTAKMWFSALGVPNTPYIFLNELNQESIAQTKQALENWGSIFIKAASQGSSVGCYRVDSQDELVSSLEQAFSFSPYVIVEKTINARELEVAAYELNGEIVATKPGEIICASNTFYSFDEKYAANSKAETKVEADVSEEVAQQIQAYAIKVFKGMKLSHLSRIDFFLTEDNEILLNEINTFPGLTPISMFPKMLQNHGDDFTHYLYSNIKSQLVSA.

The ATP-grasp domain occupies K124–K329. Residue A154–E209 coordinates ATP. 3 residues coordinate Mg(2+): D283, E296, and N298.

The protein belongs to the D-alanine--D-alanine ligase family. Mg(2+) is required as a cofactor. Requires Mn(2+) as cofactor.

It localises to the cytoplasm. The catalysed reaction is 2 D-alanine + ATP = D-alanyl-D-alanine + ADP + phosphate + H(+). Its pathway is cell wall biogenesis; peptidoglycan biosynthesis. Cell wall formation. In Shewanella woodyi (strain ATCC 51908 / MS32), this protein is D-alanine--D-alanine ligase.